The following is a 1126-amino-acid chain: Formin-B (1126 aa).

The segment at 1-21 is disordered; the sequence is MFFKGKKKDKEKEKSHGNIGN. In terms of domain architecture, GBD/FH3 spans 38–406; sequence EQNLSNEDLK…LILKDPSKES (369 aa). Residues 427–447 are compositionally biased toward low complexity; sequence LNNSNNNNNNNNSNNNNNDSN. Residues 427 to 462 form a disordered region; that stretch reads LNNSNNNNNNNNSNNNNNDSNVSTPNINTGSPLLPP. Residues 448–462 are compositionally biased toward polar residues; the sequence is VSTPNINTGSPLLPP. Positions 463 to 514 form a coiled coil; that stretch reads QQYQDLEQKLQLTQNEKNESQNKVKQLESEIKGLNSTLTGLQLKVTKLEADL. Residues 518 to 532 are compositionally biased toward polar residues; sequence SVTTPPSDTNGTTSP. 2 disordered regions span residues 518–619 and 1004–1078; these read SVTT…SVPS and ARKK…QNGT. In terms of domain architecture, FH1 spans 527–611; sequence NGTTSPPIEA…PGAPAVPNLP (85 aa). Pro residues predominate over residues 543–597; that stretch reads GAPPPPPPPPPAPPVSGGGPPPPPPPPPPSSGGGPPPPPPPPSSGGPPPPPPPPG. Composition is skewed to low complexity over residues 598–607, 1009–1022, and 1032–1064; these read GMKKPGAPAV, AASG…SGSS, and SPIT…QQQQ. Positions 612 to 1011 constitute an FH2 domain; that stretch reads PKKSSVPSVK…LAARKKAAAS (400 aa). Residues 980-1010 adopt a coiled-coil conformation; the sequence is KFKNEFKRTIESIQKERENVQKLAARKKAAA. The DAD domain occupies 1071 to 1100; the sequence is DDIPQNGTFMDQLMSKMKGGEAIRASRRAS.

The protein belongs to the formin homology family. Diaphanous subfamily. Interacts (via GBD/FH3 domain) with activated Rho-GTPases. Interacts with pfyA and pfyB.

Its function is as follows. Formins play an important role in the nucleation of actin and the formation of linear actin filaments. In Dictyostelium discoideum (Social amoeba), this protein is Formin-B (forB).